The following is a 1415-amino-acid chain: MNQELSTNPFNPVAPVKTFDEIKISLASPERILSWSYGEIKKPETINYRTFKPERDGLFCARIFGPIKDYECLCGKYKRMKYRGVVCEKCGVEVTLQKVRRERMGHIELAAPVAHIWFLKSLPSRIGLMLDMTLRDLERILYFENYVVIEPGLTDLTYGQLMTEEEFLDAQDQYGADAFTANIGAEAIREMLSAIDLEQTAETLREELKEATGELKPKKIIKRLKIVESFLESGNRPEWMILTVLPVIPPELRPLVPLDGGRFATSDLNDLYRRVINRNNRLKRLIELRAPDIIVRNEKRMLQEAVDALFDNGRRGRVITGTNKRPLKSLSDMLKGKQGRFRQNLLGKRVDFSGRSVIVTGPELKLHQCGLPKKMALELFKPFIYSRLEAKGLSSTVKQAKKLVEKERPEVWDILDEVIREHPVLLNRAPTLHRLGIQAFEPILIEGKAIQLHPLVCSAFNADFDGDQMAVHVPLSLEAQLEARVLMMSTNNVLSPANGAPIIVPSQDMVLGLYYTTMERRGMKGEGMAFSSVEEVEHALAAGEVHLHATITARIKQIDEEGNEVVKRYQTTPGRLRLGNLLPLNAKAPFELVNRLLRKKDVQNVIDTVYRYCGQKESVIFCDQIMGMGFREAFKAGISFGKDDMLIPDTKWPIVNEVRDQVKEFEQQYMDGLITQGEKYNKVVDAWSKCSDKVAGEMMAEISAVRYDDAGAEKEPNSVYMMSHSGARGSPAQMKQLGGMRGLMAKPNGEIIETPIISNFKEGLTVLEYFNSTHGARKGLADTALKTANSGYLTRRLVDVAQDCIVRTHDCGTENAITASAAVNEGEVVSPLAERVLGRVAAEDILVPGSDEVIVARGELIDERRADLVDQANVASVRIRSPLTCEAEEGVCAMCYGRDLARGTLVNIGEAVGIIAAQSIGEPGTQLTMRTFHIGGIAQGGQQSFLEASQEGRIEFRNPNLLENANGEQIVMGRNMQLAIIDEAGQERATHKLTYGAKVHVKDGQTVKRATRLFEWDPYTLPIIAEKAGVARFVDLVSGISVREDTDEATGMTQKIVSDWRSTPKGGDLKPEIIIMNPETGDPMRNEAGNPISYPMSVEAILSVEDGQTVRAGDVVARIPREGARTKDITGGLPRVAELFEARRPKDHAIIAENDGYVRFGKDYKNKRRITIEPVDDTLNSVEYMVPKGKHIPVQEGDFVQKGDYIMDGNPAPHDILRILGVEALANYMIDEVQEVYRLQGVKINDKHIEVIVRQMLQKYEILDSGETTLLKGEHVDKAELDEVNQKAMDHGMRPAHAEPILLGITKASLQTRSFISAASFQETTRVLTEASVQGKRDKLVGLKENVIVGRLIPAGTGGATSRVKKIAHDRDQKVIDTRRAEAESAAALAAPTDGVIDLGSEDSGLVETVENREE.

Cysteine 72, cysteine 74, cysteine 87, and cysteine 90 together coordinate Zn(2+). Residues aspartate 463, aspartate 465, and aspartate 467 each coordinate Mg(2+). 4 residues coordinate Zn(2+): cysteine 811, cysteine 885, cysteine 892, and cysteine 895.

This sequence belongs to the RNA polymerase beta' chain family. The RNAP catalytic core consists of 2 alpha, 1 beta, 1 beta' and 1 omega subunit. When a sigma factor is associated with the core the holoenzyme is formed, which can initiate transcription. Requires Mg(2+) as cofactor. The cofactor is Zn(2+).

It carries out the reaction RNA(n) + a ribonucleoside 5'-triphosphate = RNA(n+1) + diphosphate. Its function is as follows. DNA-dependent RNA polymerase catalyzes the transcription of DNA into RNA using the four ribonucleoside triphosphates as substrates. The protein is DNA-directed RNA polymerase subunit beta' of Cereibacter sphaeroides (strain ATCC 17023 / DSM 158 / JCM 6121 / CCUG 31486 / LMG 2827 / NBRC 12203 / NCIMB 8253 / ATH 2.4.1.) (Rhodobacter sphaeroides).